Reading from the N-terminus, the 347-residue chain is NADH-ubiquinone oxidoreductase chain 2 (347 aa).

10 helical membrane passes run 13–33 (IFTG…WLGL), 55–75 (AAIK…MAIL), 96–116 (LMIV…FWVP), 122–142 (VPLT…ISIM), 151–171 (TNIL…GGLN), 178–198 (ILAY…PYNP), 199–219 (DITI…FLIL), 237–257 (LTWL…LPPL), 274–294 (GNLI…YFYV), and 326–346 (LPTL…ILSI).

The protein belongs to the complex I subunit 2 family. As to quaternary structure, core subunit of respiratory chain NADH dehydrogenase (Complex I) which is composed of 45 different subunits. Interacts with TMEM242.

Its subcellular location is the mitochondrion inner membrane. The catalysed reaction is a ubiquinone + NADH + 5 H(+)(in) = a ubiquinol + NAD(+) + 4 H(+)(out). Functionally, core subunit of the mitochondrial membrane respiratory chain NADH dehydrogenase (Complex I) which catalyzes electron transfer from NADH through the respiratory chain, using ubiquinone as an electron acceptor. Essential for the catalytic activity and assembly of complex I. The protein is NADH-ubiquinone oxidoreductase chain 2 of Pongo abelii (Sumatran orangutan).